A 133-amino-acid polypeptide reads, in one-letter code: NADPH-dependent 7-cyano-7-deazaguanine reductase (133 aa).

Cysteine 49 acts as the Thioimide intermediate in catalysis. Aspartate 56 (proton donor) is an active-site residue. Substrate-binding positions include 71 to 73 (IEL) and 90 to 91 (HE).

Belongs to the GTP cyclohydrolase I family. QueF type 1 subfamily.

The protein localises to the cytoplasm. It carries out the reaction 7-aminomethyl-7-carbaguanine + 2 NADP(+) = 7-cyano-7-deazaguanine + 2 NADPH + 3 H(+). It participates in tRNA modification; tRNA-queuosine biosynthesis. Catalyzes the NADPH-dependent reduction of 7-cyano-7-deazaguanine (preQ0) to 7-aminomethyl-7-deazaguanine (preQ1). This is NADPH-dependent 7-cyano-7-deazaguanine reductase from Leptospira interrogans serogroup Icterohaemorrhagiae serovar copenhageni (strain Fiocruz L1-130).